The sequence spans 86 residues: Large ribosomal subunit protein bL35m (86 aa).

Residues 1 to 18 constitute a mitochondrion transit peptide; it reads MLVVFQRVVRATVLVGRK. The disordered stretch occupies residues 45-69; that stretch reads RKHAGAQHLNRDTSSSTRARQRQWE.

The protein belongs to the bacterial ribosomal protein bL35 family. In terms of assembly, component of the mitochondrial large ribosomal subunit (mt-LSU). Mature yeast 74S mitochondrial ribosomes consist of a small (37S) and a large (54S) subunit. The 37S small subunit contains a 15S ribosomal RNA (15S mt-rRNA) and at least 32 different proteins. The 54S large subunit contains a 21S rRNA (21S mt-rRNA) and at least 45 different proteins.

Its subcellular location is the mitochondrion. Functionally, component of the mitochondrial ribosome (mitoribosome), a dedicated translation machinery responsible for the synthesis of mitochondrial genome-encoded proteins, including at least some of the essential transmembrane subunits of the mitochondrial respiratory chain. The mitoribosomes are attached to the mitochondrial inner membrane and translation products are cotranslationally integrated into the membrane. This Schizosaccharomyces pombe (strain 972 / ATCC 24843) (Fission yeast) protein is Large ribosomal subunit protein bL35m (new15).